A 399-amino-acid chain; its full sequence is Tryptophan synthase beta chain (399 aa).

Lys-92 is modified (N6-(pyridoxal phosphate)lysine).

It belongs to the TrpB family. Tetramer of two alpha and two beta chains. It depends on pyridoxal 5'-phosphate as a cofactor.

It catalyses the reaction (1S,2R)-1-C-(indol-3-yl)glycerol 3-phosphate + L-serine = D-glyceraldehyde 3-phosphate + L-tryptophan + H2O. Its pathway is amino-acid biosynthesis; L-tryptophan biosynthesis; L-tryptophan from chorismate: step 5/5. The beta subunit is responsible for the synthesis of L-tryptophan from indole and L-serine. The sequence is that of Tryptophan synthase beta chain from Bordetella bronchiseptica (strain ATCC BAA-588 / NCTC 13252 / RB50) (Alcaligenes bronchisepticus).